We begin with the raw amino-acid sequence, 46 residues long: Ligatoxin-B (46 aa).

3 disulfides stabilise this stretch: Cys-3–Cys-40, Cys-4–Cys-32, and Cys-16–Cys-26.

This sequence belongs to the plant thionin (TC 1.C.44) family.

The protein localises to the secreted. Its function is as follows. Thionins are small plant proteins which are toxic to animal cells. They seem to exert their toxic effect at the level of the cell membrane. Their precise function is not known. The protein is Ligatoxin-B of Phoradendron liga (Argentine mistletoe).